The following is a 491-amino-acid chain: Carbohydrate ABC transporter substrate-binding protein (491 aa).

Zn(2+)-binding residues include Asp212, His247, His252, and Glu256.

Belongs to the bacterial solute-binding protein 1 family. Exists as a monomer, homodimer, homotrimer and homotetramer; oligomerization increases with higher protein concentration.

Its subcellular location is the cell surface. Functionally, probably part of an ABC transporter complex involved in carbohydrate transport. This Streptococcus pneumoniae serotype 4 (strain ATCC BAA-334 / TIGR4) protein is Carbohydrate ABC transporter substrate-binding protein.